Reading from the N-terminus, the 172-residue chain is Large ribosomal subunit protein bL17 (172 aa).

The disordered stretch occupies residues 153-172 (AQAAEPVAAAEPATPATTAG).

Belongs to the bacterial ribosomal protein bL17 family. Part of the 50S ribosomal subunit. Contacts protein L32.

The polypeptide is Large ribosomal subunit protein bL17 (Sorangium cellulosum (strain So ce56) (Polyangium cellulosum (strain So ce56))).